We begin with the raw amino-acid sequence, 145 residues long: Histone H2B.10 (145 aa).

Residues 1–15 (MAKADKKPAEKKPAE) are compositionally biased toward basic and acidic residues. Positions 1-53 (MAKADKKPAEKKPAEKTPAAEPAAAAEKKPKAGKKLPKEPAGAGDKKKKRSKK) are disordered. N6-methyllysine is present on lysine 3. N6-acetyllysine is present on residues lysine 6 and lysine 11. Position 12 is an N6,N6-dimethyllysine (lysine 12). 3 positions are modified to N6-acetyllysine: lysine 16, lysine 28, and lysine 34. A compositionally biased stretch (low complexity) spans 16–25 (KTPAAEPAAA). Lysine 35 bears the N6-acetyllysine; partial mark. Lysine 141 is covalently cross-linked (Glycyl lysine isopeptide (Lys-Gly) (interchain with G-Cter in ubiquitin)).

The protein belongs to the histone H2B family. In terms of assembly, the nucleosome is a histone octamer containing two molecules each of H2A, H2B, H3 and H4 assembled in one H3-H4 heterotetramer and two H2A-H2B heterodimers. The octamer wraps approximately 147 bp of DNA. Interacts with ORTH2. Can be acetylated to form H2BK5ac, H2BK10ac, H2BK15ac, H2BK27ac, H2BK33ac and H2BK34ac. In terms of processing, dimethylated to form H2BK11me2. Post-translationally, monoubiquitinated by BRE1 to form H2BK143ub1 and deubiquitinated by UBP26. Required for heterochromatic histone H3 di- and trimethylation at H3K4me. May give a specific tag for epigenetic transcriptional activation.

The protein localises to the nucleus. It is found in the chromosome. Its function is as follows. Core component of nucleosome. Nucleosomes wrap and compact DNA into chromatin, limiting DNA accessibility to the cellular machineries which require DNA as a template. Histones thereby play a central role in transcription regulation, DNA repair, DNA replication and chromosomal stability. DNA accessibility is regulated via a complex set of post-translational modifications of histones, also called histone code, and nucleosome remodeling. The sequence is that of Histone H2B.10 from Arabidopsis thaliana (Mouse-ear cress).